Consider the following 449-residue polypeptide: Phosphoglucosamine mutase (449 aa).

Ser101 functions as the Phosphoserine intermediate in the catalytic mechanism. Ser101, Asp242, Asp244, and Asp246 together coordinate Mg(2+). At Ser101 the chain carries Phosphoserine.

Belongs to the phosphohexose mutase family. Mg(2+) is required as a cofactor. In terms of processing, activated by phosphorylation.

It catalyses the reaction alpha-D-glucosamine 1-phosphate = D-glucosamine 6-phosphate. Functionally, catalyzes the conversion of glucosamine-6-phosphate to glucosamine-1-phosphate. In Bradyrhizobium sp. (strain BTAi1 / ATCC BAA-1182), this protein is Phosphoglucosamine mutase.